The sequence spans 153 residues: UPF0266 membrane protein YPTB1631 (153 aa).

3 helical membrane passes run 6-26, 45-65, and 67-87; these read LVLVVFIALLLIYAIYDEFIM, LDCMIFVGLIGILIYNNVMAH, and APLTTYLLVGLALVAVYISYI.

This sequence belongs to the UPF0266 family.

The protein resides in the cell inner membrane. The protein is UPF0266 membrane protein YPTB1631 of Yersinia pseudotuberculosis serotype I (strain IP32953).